Reading from the N-terminus, the 434-residue chain is Serine--tRNA ligase (434 aa).

An L-serine-binding site is contributed by 237–239 (TAE). 268–270 (RAE) contributes to the ATP binding site. L-serine is bound at residue Glu291. ATP is bound at residue 358–361 (EISS). Ser393 provides a ligand contact to L-serine.

Belongs to the class-II aminoacyl-tRNA synthetase family. Type-1 seryl-tRNA synthetase subfamily. As to quaternary structure, homodimer. The tRNA molecule binds across the dimer.

It localises to the cytoplasm. The enzyme catalyses tRNA(Ser) + L-serine + ATP = L-seryl-tRNA(Ser) + AMP + diphosphate + H(+). The catalysed reaction is tRNA(Sec) + L-serine + ATP = L-seryl-tRNA(Sec) + AMP + diphosphate + H(+). It functions in the pathway aminoacyl-tRNA biosynthesis; selenocysteinyl-tRNA(Sec) biosynthesis; L-seryl-tRNA(Sec) from L-serine and tRNA(Sec): step 1/1. In terms of biological role, catalyzes the attachment of serine to tRNA(Ser). Is also able to aminoacylate tRNA(Sec) with serine, to form the misacylated tRNA L-seryl-tRNA(Sec), which will be further converted into selenocysteinyl-tRNA(Sec). The polypeptide is Serine--tRNA ligase (Rhodopseudomonas palustris (strain BisB5)).